The following is a 612-amino-acid chain: Dihydroxy-acid dehydratase (612 aa).

D81 provides a ligand contact to Mg(2+). Residue C122 coordinates [2Fe-2S] cluster. Mg(2+)-binding residues include D123 and K124. K124 carries the post-translational modification N6-carboxylysine. C193 is a [2Fe-2S] cluster binding site. E489 contributes to the Mg(2+) binding site. The Proton acceptor role is filled by S515.

This sequence belongs to the IlvD/Edd family. Homodimer. Requires [2Fe-2S] cluster as cofactor. It depends on Mg(2+) as a cofactor.

The catalysed reaction is (2R)-2,3-dihydroxy-3-methylbutanoate = 3-methyl-2-oxobutanoate + H2O. The enzyme catalyses (2R,3R)-2,3-dihydroxy-3-methylpentanoate = (S)-3-methyl-2-oxopentanoate + H2O. The protein operates within amino-acid biosynthesis; L-isoleucine biosynthesis; L-isoleucine from 2-oxobutanoate: step 3/4. It functions in the pathway amino-acid biosynthesis; L-valine biosynthesis; L-valine from pyruvate: step 3/4. Its function is as follows. Functions in the biosynthesis of branched-chain amino acids. Catalyzes the dehydration of (2R,3R)-2,3-dihydroxy-3-methylpentanoate (2,3-dihydroxy-3-methylvalerate) into 2-oxo-3-methylpentanoate (2-oxo-3-methylvalerate) and of (2R)-2,3-dihydroxy-3-methylbutanoate (2,3-dihydroxyisovalerate) into 2-oxo-3-methylbutanoate (2-oxoisovalerate), the penultimate precursor to L-isoleucine and L-valine, respectively. The polypeptide is Dihydroxy-acid dehydratase (Stenotrophomonas maltophilia (strain K279a)).